The following is a 467-amino-acid chain: MNTLHIFDSVKKEKVEFKPIQEGKVKIYVCGPTVYDDSHLGHARSAIAFDLLHRVLKVNDYEVTMTKNFTDIDDKIIKKMYETNKTLENITNQYINAYKADMKALNILDNTIEPKATENLEVMKEMISNLISKDVAYKTSDSVYFDTSKDNLYGTLSHKSNDENSQARVEENQEKRNSADFALWKFEKANDVSFDAPFGKGRPGWHIECSAMIEKHLAYKDSPYQIDIHAGGADLLFPHHENEAAQTRCSSGQNLAKYWMHNGFVNINGEKMSKSLGNSFFLKDVLKSYSGEVIRFYLMSTHYRADLSFNEEDLIASKKRLDKIYRLKKRVYGIEDSSVNKKFKEDILNALNDDINTSIALSVIDEMINSANDKLDSNPKDKNLKKELISNINFIEEVLGIGGNDAYAYFQFGINESTKEKIESLILKRNEAKKTKDFQTADKLRDELSSMDISLMDTVNGTVWEKL.

C30 provides a ligand contact to Zn(2+). Positions 32–42 match the 'HIGH' region motif; the sequence is PTVYDDSHLGH. Zn(2+) is bound by residues C209, H239, and E243. A 'KMSKS' region motif is present at residues 271–275; sequence KMSKS. Residue K274 participates in ATP binding.

It belongs to the class-I aminoacyl-tRNA synthetase family. In terms of assembly, monomer. It depends on Zn(2+) as a cofactor.

It is found in the cytoplasm. The enzyme catalyses tRNA(Cys) + L-cysteine + ATP = L-cysteinyl-tRNA(Cys) + AMP + diphosphate. The polypeptide is Cysteine--tRNA ligase (Aliarcobacter butzleri (strain RM4018) (Arcobacter butzleri)).